Here is a 905-residue protein sequence, read N- to C-terminus: Protein translocase subunit SecA (905 aa).

ATP contacts are provided by residues Gln89, 107 to 111, and Asp502; that span reads GEGKT. 4 residues coordinate Zn(2+): Cys887, Cys889, Cys898, and His899.

Belongs to the SecA family. Monomer and homodimer. Part of the essential Sec protein translocation apparatus which comprises SecA, SecYEG and auxiliary proteins SecDF-YajC and YidC. Requires Zn(2+) as cofactor.

The protein resides in the cell inner membrane. The protein localises to the cytoplasm. The catalysed reaction is ATP + H2O + cellular proteinSide 1 = ADP + phosphate + cellular proteinSide 2.. Functionally, part of the Sec protein translocase complex. Interacts with the SecYEG preprotein conducting channel. Has a central role in coupling the hydrolysis of ATP to the transfer of proteins into and across the cell membrane, serving both as a receptor for the preprotein-SecB complex and as an ATP-driven molecular motor driving the stepwise translocation of polypeptide chains across the membrane. This is Protein translocase subunit SecA from Rhizobium leguminosarum bv. trifolii (strain WSM2304).